The sequence spans 107 residues: uncharacterized protein (107 aa).

This is an uncharacterized protein from Homo sapiens (Human).